Reading from the N-terminus, the 209-residue chain is Ribosomal RNA large subunit methyltransferase E (209 aa).

Residues Gly63, Trp65, Asp83, Asp99, and Asp124 each coordinate S-adenosyl-L-methionine. Catalysis depends on Lys164, which acts as the Proton acceptor.

Belongs to the class I-like SAM-binding methyltransferase superfamily. RNA methyltransferase RlmE family.

The protein resides in the cytoplasm. It catalyses the reaction uridine(2552) in 23S rRNA + S-adenosyl-L-methionine = 2'-O-methyluridine(2552) in 23S rRNA + S-adenosyl-L-homocysteine + H(+). In terms of biological role, specifically methylates the uridine in position 2552 of 23S rRNA at the 2'-O position of the ribose in the fully assembled 50S ribosomal subunit. The polypeptide is Ribosomal RNA large subunit methyltransferase E (Shewanella piezotolerans (strain WP3 / JCM 13877)).